Consider the following 191-residue polypeptide: Large ribosomal subunit protein uL29m (191 aa).

The protein belongs to the universal ribosomal protein uL29 family. As to quaternary structure, component of the mitochondrial large ribosomal subunit. Mature mitochondrial ribosomes consist of a small (37S) and a large (54S) subunit. The 37S subunit contains at least 33 different proteins and 1 molecule of RNA (15S). The 54S subunit contains at least 45 different proteins and 1 molecule of RNA (21S).

The protein resides in the mitochondrion. This is Large ribosomal subunit protein uL29m (MRPL4) from Sclerotinia sclerotiorum (strain ATCC 18683 / 1980 / Ss-1) (White mold).